We begin with the raw amino-acid sequence, 724 residues long: 1,3-beta-galactosyl-N-acetylhexosamine phosphorylase Cphy3030 (724 aa).

The Proton donor role is filled by D316.

Belongs to the glycoside hydrolase 112 family.

The catalysed reaction is beta-D-galactosyl-(1-&gt;3)-N-acetyl-D-glucosamine + phosphate = alpha-D-galactose 1-phosphate + N-acetyl-D-glucosamine. Functionally, reversibly phosphorolyzes beta-D-galactopyranosyl-(1-&gt;3)-N-acetyl-D-glucosamine to form alpha-D-galactopyranose 1-phosphate and acetyl-D-glucosamine. Active towards galacto-N-biose and lacto-N-biose. Does not phosphorolyze galacto-N-tetraose or lacto-N-tetraose. In the reverse reaction has activity toward N-acetyl-D-glucosamine and N-acetyl-D-galactosamine, but not L-rhamnose, D-glucose or D-galactose. In Lachnoclostridium phytofermentans (strain ATCC 700394 / DSM 18823 / ISDg) (Clostridium phytofermentans), this protein is 1,3-beta-galactosyl-N-acetylhexosamine phosphorylase Cphy3030.